The chain runs to 306 residues: 2-phospho-L-lactate transferase (306 aa).

7,8-didemethyl-8-hydroxy-5-deazariboflavin-binding residues include D54 and R93.

The protein belongs to the CofD family. In terms of assembly, homodimer. Requires Mg(2+) as cofactor.

The catalysed reaction is (2S)-lactyl-2-diphospho-5'-guanosine + 7,8-didemethyl-8-hydroxy-5-deazariboflavin = oxidized coenzyme F420-0 + GMP + H(+). Its pathway is cofactor biosynthesis; coenzyme F420 biosynthesis. Its function is as follows. Catalyzes the transfer of the 2-phospholactate moiety from (2S)-lactyl-2-diphospho-5'-guanosine to 7,8-didemethyl-8-hydroxy-5-deazariboflavin (FO) with the formation of oxidized coenzyme F420-0 and GMP. The chain is 2-phospho-L-lactate transferase from Methanothermobacter thermautotrophicus (strain ATCC 29096 / DSM 1053 / JCM 10044 / NBRC 100330 / Delta H) (Methanobacterium thermoautotrophicum).